The primary structure comprises 104 residues: MKFFVYNPLLKTASLNIKVKAAAKSNDIKEFIIINDVLHLKLSIKAHAQQGKANEEIINFLAKEWQLLRSNLEITKGHTNSLKTILIKNIDEEYLNLILKPYIK.

This sequence belongs to the UPF0235 family.

This is UPF0235 protein RBE_0633 from Rickettsia bellii (strain RML369-C).